Here is a 138-residue protein sequence, read N- to C-terminus: Ribosome-binding factor A (138 aa).

Positions 112-138 are disordered; the sequence is EARTQGQAPAADVEPAPGAAPDDEAEE. Residues 119–131 are compositionally biased toward low complexity; it reads APAADVEPAPGAA.

The protein belongs to the RbfA family. Monomer. Binds 30S ribosomal subunits, but not 50S ribosomal subunits or 70S ribosomes.

It is found in the cytoplasm. One of several proteins that assist in the late maturation steps of the functional core of the 30S ribosomal subunit. Associates with free 30S ribosomal subunits (but not with 30S subunits that are part of 70S ribosomes or polysomes). Required for efficient processing of 16S rRNA. May interact with the 5'-terminal helix region of 16S rRNA. The sequence is that of Ribosome-binding factor A from Anaeromyxobacter sp. (strain K).